Reading from the N-terminus, the 117-residue chain is Peptidyl-tRNA hydrolase (117 aa).

Belongs to the PTH2 family.

It localises to the cytoplasm. It catalyses the reaction an N-acyl-L-alpha-aminoacyl-tRNA + H2O = an N-acyl-L-amino acid + a tRNA + H(+). In terms of biological role, the natural substrate for this enzyme may be peptidyl-tRNAs which drop off the ribosome during protein synthesis. In Thermoplasma volcanium (strain ATCC 51530 / DSM 4299 / JCM 9571 / NBRC 15438 / GSS1), this protein is Peptidyl-tRNA hydrolase.